We begin with the raw amino-acid sequence, 279 residues long: 2-dehydro-3-deoxyphosphooctonate aldolase (279 aa).

Belongs to the KdsA family.

The protein localises to the cytoplasm. It catalyses the reaction D-arabinose 5-phosphate + phosphoenolpyruvate + H2O = 3-deoxy-alpha-D-manno-2-octulosonate-8-phosphate + phosphate. Its pathway is carbohydrate biosynthesis; 3-deoxy-D-manno-octulosonate biosynthesis; 3-deoxy-D-manno-octulosonate from D-ribulose 5-phosphate: step 2/3. The protein operates within bacterial outer membrane biogenesis; lipopolysaccharide biosynthesis. This chain is 2-dehydro-3-deoxyphosphooctonate aldolase, found in Aromatoleum aromaticum (strain DSM 19018 / LMG 30748 / EbN1) (Azoarcus sp. (strain EbN1)).